The following is a 336-amino-acid chain: MAKVYYEKDVTVNVLKEKKVAIIGYGSQGHAHAQNLRDNGFDVVVGLRKGKSWDKAKEDGFSVYTVAEAAKQADVVMILLPDELQPEVYEAEIAPNLQAGNSLVFAHGFNVHFDQVKPPANVDVFLVAPKGPGHLVRRTFSEGGAVPALFAVYQDATGVATEKALSYADGIGATRAGVLETTFKEETETDLFGEQAVLCGGVTALVKAGFETLVDAGYQPELAYFECLHELKLIVDLMYEGGLENMRYSVSDTAQWGDFVSGPRVVTEDTKKAMGAVLAEIQDGTFARGWIAEHKAGRPNFHATNEKENEHEIEVVGRKLREMMPFVQPRVKAGVK.

One can recognise a KARI N-terminal Rossmann domain in the interval 2–181 (AKVYYEKDVT…GATRAGVLET (180 aa)). Residues 25-28 (YGSQ), arginine 48, serine 52, and 82-85 (DELQ) contribute to the NADP(+) site. Histidine 107 is a catalytic residue. Residue glycine 133 participates in NADP(+) binding. In terms of domain architecture, KARI C-terminal knotted spans 182-327 (TFKEETETDL…RKLREMMPFV (146 aa)). Mg(2+) contacts are provided by aspartate 190, glutamate 194, glutamate 226, and glutamate 230. Position 251 (serine 251) interacts with substrate.

It belongs to the ketol-acid reductoisomerase family. It depends on Mg(2+) as a cofactor.

It carries out the reaction (2R)-2,3-dihydroxy-3-methylbutanoate + NADP(+) = (2S)-2-acetolactate + NADPH + H(+). The catalysed reaction is (2R,3R)-2,3-dihydroxy-3-methylpentanoate + NADP(+) = (S)-2-ethyl-2-hydroxy-3-oxobutanoate + NADPH + H(+). It participates in amino-acid biosynthesis; L-isoleucine biosynthesis; L-isoleucine from 2-oxobutanoate: step 2/4. Its pathway is amino-acid biosynthesis; L-valine biosynthesis; L-valine from pyruvate: step 2/4. Involved in the biosynthesis of branched-chain amino acids (BCAA). Catalyzes an alkyl-migration followed by a ketol-acid reduction of (S)-2-acetolactate (S2AL) to yield (R)-2,3-dihydroxy-isovalerate. In the isomerase reaction, S2AL is rearranged via a Mg-dependent methyl migration to produce 3-hydroxy-3-methyl-2-ketobutyrate (HMKB). In the reductase reaction, this 2-ketoacid undergoes a metal-dependent reduction by NADPH to yield (R)-2,3-dihydroxy-isovalerate. The protein is Ketol-acid reductoisomerase (NADP(+)) 1 of Bacillus cereus (strain ZK / E33L).